We begin with the raw amino-acid sequence, 221 residues long: Transcriptional regulatory protein QseB (221 aa).

Residues 2-116 (RILLIEDDNL…EVAARLQALI (115 aa)) enclose the Response regulatory domain. The residue at position 51 (aspartate 51) is a 4-aspartylphosphate. The segment at residues 124 to 218 (HSVIEQAGVK…VHGVGYALGQ (95 aa)) is a DNA-binding region (ompR/PhoB-type).

Post-translationally, phosphorylated by QseC.

The protein localises to the cytoplasm. In terms of biological role, member of a two-component regulatory system QseB/QseC. The chain is Transcriptional regulatory protein QseB (qseB) from Haemophilus influenzae (strain ATCC 51907 / DSM 11121 / KW20 / Rd).